The sequence spans 56 residues: uncharacterized protein (56 aa).

4Fe-4S ferredoxin-type domains are found at residues 2–28 (VKID…NLIE) and 29–56 (HIIV…LEGE). Residues Cys-9, Cys-12, Cys-15, Cys-19, Cys-38, Cys-41, Cys-44, and Cys-48 each coordinate [4Fe-4S] cluster.

The cofactor is [4Fe-4S] cluster.

In terms of biological role, ferredoxins are iron-sulfur proteins that transfer electrons in a wide variety of metabolic reactions. This is an uncharacterized protein from Methanocaldococcus jannaschii (strain ATCC 43067 / DSM 2661 / JAL-1 / JCM 10045 / NBRC 100440) (Methanococcus jannaschii).